The primary structure comprises 60 residues: Protein BNLF2a (60 aa).

Over residues 14-26 the composition is skewed to polar residues; sequence SSACGLPGSSTET. Residues 14-34 form a disordered region; it reads SSACGLPGSSTETRPSHPCPE. Residues 41–59 traverse the membrane as a helical segment; sequence LRLLLVVLCVLFGLLCLLL.

This sequence belongs to the lymphocryptovirus BNLF2a family. In terms of assembly, interacts with host TAP1 and TAP2.

It localises to the host endoplasmic reticulum membrane. In terms of biological role, participates in viral evasion from HLA class I-restricted T-cell immunity. Associates with host TAP1 and TAP2 and prevents TAP-mediated peptide transport and subsequent loading. This Homo sapiens (Human) protein is Protein BNLF2a.